The sequence spans 432 residues: D-amino acid dehydrogenase 1 (432 aa).

3–17 (VLILGSGVVGTVSAY) lines the FAD pocket.

The protein belongs to the DadA oxidoreductase family. It depends on FAD as a cofactor.

The catalysed reaction is a D-alpha-amino acid + A + H2O = a 2-oxocarboxylate + AH2 + NH4(+). Functionally, oxidative deamination of D-amino acids. This chain is D-amino acid dehydrogenase 1 (dadA1), found in Pseudomonas putida (strain ATCC 47054 / DSM 6125 / CFBP 8728 / NCIMB 11950 / KT2440).